The following is a 244-amino-acid chain: SURF1-like protein (244 aa).

Helical transmembrane passes span 7-23 (ILTT…WQLS) and 201-219 (YAIT…YVIY).

Belongs to the SURF1 family.

Its subcellular location is the cell membrane. This Rickettsia prowazekii (strain Madrid E) protein is SURF1-like protein.